Here is a 453-residue protein sequence, read N- to C-terminus: MAVSCPEVMYGAYYPYLYGRAGTSRSFYQYERFNQDLYSSSGVNLAASSSASGSSHSPCSPILPPSVSANAAAAVAAAAHNSAAAAVAVAANQASSSGGIGGGGLGGLGGLGGGPASGLLGSNVVPGSSSVGSVGLGMSPVLSGAAGHSLHSSHRTHAHSLAHAHTHPHSHTHTHTHQTKEEDLIVPRSEAEARLVGSQQHQHHNESSCSSGPDSPRHAHSHSHPLHGGGGATGGPSSAGGTGSGGGDGGGTGAIPKNLPALETPMGSGGGGLAGSGQGQAQYLSASCVVFTNYSGDTASQVDEHFSRALNYNNKDSKESSSPMSNRNFPPSFWNSNYVHPIPAPTHHQVSDLYGTATDTGYATDPWVPHAAHYGSYAHAAHAHAAHAHAYHHNMAQYGSLLRLPQQYASHGSRLHHDQQTAHALEYSSYPTMAGLEAQVAQVQESSKDLYWF.

The interval 145–279 (AAGHSLHSSH…GGGLAGSGQG (135 aa)) is disordered. Over residues 151–177 (HSSHRTHAHSLAHAHTHPHSHTHTHTH) the composition is skewed to basic residues. Over residues 178-193 (QTKEEDLIVPRSEAEA) the composition is skewed to basic and acidic residues. Composition is skewed to gly residues over residues 227 to 253 (HGGGGATGGPSSAGGTGSGGGDGGGTG) and 267 to 278 (GSGGGGLAGSGQ). The ser-rich sd binding domain stretch occupies residues 279 to 335 (GQAQYLSASCVVFTNYSGDTASQVDEHFSRALNYNNKDSKESSSPMSNRNFPPSFWN).

As to quaternary structure, the Ser-rich protein domain within the C-terminal region interacts with the C-terminus of sd to form a complex which acts as a selector for wing development. Interacts with Dhfr. Expressed in the developing wing primordia initially along the D/V wing boundary, and by the late third larval instar, maximal expression is seen in cells at the D/V wing disk boundary. Less expression is seen in cells located farther from this boundary.

It is found in the nucleus. Functionally, involved in determining which thoracic imaginal disk cells will form wings and halteres, perhaps by interacting with other nuclear regulatory proteins. When in combination with scalloped (sd), it acts as a transcriptional activation complex that regulates gene expression in the wing. Binding to sd switches the DNA target selectivity of sd. Required and sufficient for cell proliferation at the dorsal/ventral (D/V) boundary of the wing imaginal disk. Also required for cell proliferation in the wing imaginal disk, mediated via activation of E2f. By interacting with Dhfr, may control genes involved in DNA replication. This chain is Protein vestigial (vg), found in Drosophila melanogaster (Fruit fly).